The following is a 144-amino-acid chain: Large ribosomal subunit protein uL15 (144 aa).

Residues 1–57 are disordered; sequence MRLNTLSPAPGSKPSAKRVGRGIGSGLGKTCGRGHKGQKSRSGGSVRPGFEGGQMPL. Positions 21–31 are enriched in gly residues; the sequence is RGIGSGLGKTC.

This sequence belongs to the universal ribosomal protein uL15 family. As to quaternary structure, part of the 50S ribosomal subunit.

Functionally, binds to the 23S rRNA. The sequence is that of Large ribosomal subunit protein uL15 from Photobacterium profundum (strain SS9).